The chain runs to 267 residues: Mitochondrial S-adenosylmethionine carrier protein (267 aa).

Solcar repeat units follow at residues 4-77 (REFT…TKSV), 86-168 (LAPI…LKAV), and 177-265 (LDSW…VRRT). The next 6 helical transmembrane spans lie at 5 to 25 (EFTA…LTLF), 49 to 69 (IYAG…AFFV), 85 to 105 (NLAP…ACLI), 142 to 162 (RGYG…FPLW), 182 to 202 (AAVC…PLDV), and 238 to 258 (FAGS…FLGA).

This sequence belongs to the mitochondrial carrier (TC 2.A.29) family.

Its subcellular location is the mitochondrion inner membrane. It catalyses the reaction S-adenosyl-L-homocysteine(out) + S-adenosyl-L-methionine(in) = S-adenosyl-L-homocysteine(in) + S-adenosyl-L-methionine(out). In terms of biological role, mitochondrial S-adenosyl-L-methionine/S-adenosyl-L-homocysteine antiporter. Mediates the exchange of cytosolic S-adenosyl-L-methionine, the predominant methyl-group donor for macromolecule methylation processes, for mitochondrial S-adenosylhomocysteine(SAH), a by-product of methylation reactions. In Danio rerio (Zebrafish), this protein is Mitochondrial S-adenosylmethionine carrier protein (slc25a26).